We begin with the raw amino-acid sequence, 121 residues long: UPF0738 protein BPUM_1088 (121 aa).

This sequence belongs to the UPF0738 family.

This is UPF0738 protein BPUM_1088 from Bacillus pumilus (strain SAFR-032).